The sequence spans 211 residues: Uridine kinase (211 aa).

13–20 contributes to the ATP binding site; it reads GGTASGKT.

Belongs to the uridine kinase family.

The protein localises to the cytoplasm. It catalyses the reaction uridine + ATP = UMP + ADP + H(+). It carries out the reaction cytidine + ATP = CMP + ADP + H(+). Its pathway is pyrimidine metabolism; CTP biosynthesis via salvage pathway; CTP from cytidine: step 1/3. The protein operates within pyrimidine metabolism; UMP biosynthesis via salvage pathway; UMP from uridine: step 1/1. In Thermus thermophilus (strain ATCC BAA-163 / DSM 7039 / HB27), this protein is Uridine kinase.